The primary structure comprises 497 residues: MGLFSSTQPPQPTTVPSDEIIPLHFWNTALCMRGTVLDVSLKFDDVLDVSKLRDALNRLLEMEDWRQLGARLRMNVDGKLEYHIPAHFDASRPAFSMTNAQHETSIADHPLGARIPHTTGTPAIFPSPDELSPLLRSADAPKHIDDWTYSDRPQLCIHVITFSDATVITITWLHTLADVMGMTTILNAWTALLQGNREAIPKLQGFRSDPLTQLGQRTPAEKYMHFNRVFGRKEFLWFIGLNIFDRLWYRQEERRTICIPATCLRSLRQQASSEISATSSSEGGTVPFVSESDVLLGWWVRSLYGALGLRTDQTILVNNALNLRTSLHESFMSKDSAYMGNALCMSPTFLQGQQIADEPLGQIALRIRESVAEQRTPEQVEAMTALQMQTMEKTGYLALVGDPRMMLLSCSNWHKARLFDMDFSPAVLQSSAQSSSQNTQKKGKPSYVNGVQHSENSFRNVLSVIGKDAGRNWWLTGVLRTDAWAHVEEQVHKLGSS.

Catalysis depends on proton acceptor residues histidine 174 and aspartate 422. Positions 430–451 (SSAQSSSQNTQKKGKPSYVNGV) are disordered.

Belongs to the plant acyltransferase family. In terms of assembly, monomer.

It functions in the pathway secondary metabolite biosynthesis; terpenoid biosynthesis. Its function is as follows. Acetyltransferase; part of the gene cluster that mediates the biosynthesis of andrastins, meroterpenoid compounds that exhibit inhibitory activity against ras farnesyltransferase, suggesting that they could be promising leads for antitumor agents. The first step of the pathway is the synthesis of 3,5-dimethylorsellinic acid (DMOA) by the polyketide synthase adrD via condensation of one acetyl-CoA starter unit with 3 malonyl-CoA units and 2 methylations. DMAO is then converted to farnesyl-DMAO by the prenyltransferase adrG. The methyltransferase adrK catalyzes the methylation of the carboxyl group of farnesyl-DMAO to farnesyl-DMAO methyl ester which is further converted to epoxyfarnesyl-DMAO methyl ester by the FAD-dependent monooxygenase adrH. The terpene cyclase adrI then catalyzes the carbon skeletal rearrangement to generate the andrastin E, the first compound in the pathway having the andrastin scaffold, with the tetracyclic ring system. The post-cyclization tailoring enzymes adrF, adrE, adrJ, and adrA, are involved in the conversion of andrastin E into andrastin A. The short chain dehydrogenase adrF is responsible for the oxidation of the C-3 a hydroxyl group of andrastin E to yield the corresponding ketone, andrastin D. The ketoreductase adrE stereoselectively reduces the carbonyl moiety to reverse the stereochemistry of the C-3 position to yield andrastin F. The acetyltransferase adrJ is the acetyltransferase that attaches the acetyl group to the C-3 hydroxyl group of andrastin F to yield andrastin C. Finally, the cytochrome P450 monooxygenase adrA catalyzes two sequential oxidation reactions of the C-23 methyl group, to generate the corresponding alcohol andrastin B, and aldehyde andrastin A. In Penicillium rubens (strain ATCC 28089 / DSM 1075 / NRRL 1951 / Wisconsin 54-1255) (Penicillium chrysogenum), this protein is Acetyltransferase adrJ.